We begin with the raw amino-acid sequence, 476 residues long: ATP synthase subunit beta (476 aa).

152 to 159 (GGAGVGKT) serves as a coordination point for ATP.

It belongs to the ATPase alpha/beta chains family. In terms of assembly, F-type ATPases have 2 components, CF(1) - the catalytic core - and CF(0) - the membrane proton channel. CF(1) has five subunits: alpha(3), beta(3), gamma(1), delta(1), epsilon(1). CF(0) has three main subunits: a(1), b(2) and c(9-12). The alpha and beta chains form an alternating ring which encloses part of the gamma chain. CF(1) is attached to CF(0) by a central stalk formed by the gamma and epsilon chains, while a peripheral stalk is formed by the delta and b chains.

Its subcellular location is the cell inner membrane. It catalyses the reaction ATP + H2O + 4 H(+)(in) = ADP + phosphate + 5 H(+)(out). In terms of biological role, produces ATP from ADP in the presence of a proton gradient across the membrane. The catalytic sites are hosted primarily by the beta subunits. The sequence is that of ATP synthase subunit beta from Acidiphilium cryptum (strain JF-5).